The following is a 667-amino-acid chain: DNA ligase (667 aa).

NAD(+) contacts are provided by residues 30–34 (DSEYD), 79–80 (SL), and glutamate 112. The N6-AMP-lysine intermediate role is filled by lysine 114. Arginine 135, glutamate 172, lysine 289, and lysine 313 together coordinate NAD(+). Zn(2+)-binding residues include cysteine 407, cysteine 410, cysteine 425, and cysteine 431. A BRCT domain is found at 590 to 667 (VRDNPLKGKT…SENEFLALLA (78 aa)).

Belongs to the NAD-dependent DNA ligase family. LigA subfamily. Mg(2+) is required as a cofactor. Requires Mn(2+) as cofactor.

It catalyses the reaction NAD(+) + (deoxyribonucleotide)n-3'-hydroxyl + 5'-phospho-(deoxyribonucleotide)m = (deoxyribonucleotide)n+m + AMP + beta-nicotinamide D-nucleotide.. In terms of biological role, DNA ligase that catalyzes the formation of phosphodiester linkages between 5'-phosphoryl and 3'-hydroxyl groups in double-stranded DNA using NAD as a coenzyme and as the energy source for the reaction. It is essential for DNA replication and repair of damaged DNA. The chain is DNA ligase from Histophilus somni (strain 2336) (Haemophilus somnus).